The chain runs to 317 residues: Transaldolase (317 aa).

Residue Lys132 is the Schiff-base intermediate with substrate of the active site.

This sequence belongs to the transaldolase family. Type 1 subfamily. As to quaternary structure, homodimer.

The protein resides in the cytoplasm. The enzyme catalyses D-sedoheptulose 7-phosphate + D-glyceraldehyde 3-phosphate = D-erythrose 4-phosphate + beta-D-fructose 6-phosphate. The protein operates within carbohydrate degradation; pentose phosphate pathway; D-glyceraldehyde 3-phosphate and beta-D-fructose 6-phosphate from D-ribose 5-phosphate and D-xylulose 5-phosphate (non-oxidative stage): step 2/3. Functionally, transaldolase is important for the balance of metabolites in the pentose-phosphate pathway. The sequence is that of Transaldolase from Histophilus somni (strain 2336) (Haemophilus somnus).